Consider the following 76-residue polypeptide: Serine palmitoyltransferase small subunit B (76 aa).

Residues 1–11 are Cytoplasmic-facing; the sequence is MDFKRVKEYFA. Residues 12 to 29 form a helical membrane-spanning segment; it reads WLYYQYQIITCCAVMEPW. The Lumenal segment spans residues 30–36; the sequence is EQSMLNT. The helical transmembrane segment at 37–57 threads the bilayer; sequence IILTIVAMVVYTAYVFIPIHI. Residues 58 to 76 are Cytoplasmic-facing; it reads RLAWEFFSKICGYDSSISN.

The protein belongs to the SPTSS family. SPTSSB subfamily. In terms of assembly, component of the serine palmitoyltransferase (SPT) complex, which is composed of SPTLC1, SPTLC2 or SPTLC3 and SPTSSA or SPTSSB. The heterodimer consisting of SPTLC1 and SPTLC2/SPTLC3 forms the catalytic core of the enzyme, while SPTSSA or SPTSSB subunits determine substrate specificity. SPT also interacts with ORMDL proteins, especially ORMDL3, which negatively regulate SPT activity in the presence of ceramides. In terms of tissue distribution, expression is strong in hypogonadal (hpg) mouse prostate, weak in mature castrated mouse prostate and absent in normal intact or androgen-replaced hpg mouse prostates.

It is found in the endoplasmic reticulum membrane. Its pathway is lipid metabolism; sphingolipid metabolism. Its function is as follows. Component of the serine palmitoyltransferase multisubunit enzyme (SPT) that catalyzes the initial and rate-limiting step in sphingolipid biosynthesis by condensing L-serine and activated acyl-CoA (most commonly palmitoyl-CoA) to form long-chain bases. The SPT complex is composed of SPTLC1, SPTLC2 or SPTLC3 and SPTSSA or SPTSSB. Within this complex, the heterodimer consisting of SPTLC1 and SPTLC2/SPTLC3 forms the catalytic core. Within the SPT complex, SPTSSB stimulates the catalytic activity and plays a role in substrate specificity. SPT complexes with this subunit showing a preference for longer acyl-CoAs. The SPTLC1-SPTLC2-SPTSSB complex shows a strong preference for C18-CoA substrate, while the SPTLC1-SPTLC3-SPTSSB isozyme displays an ability to use a broader range of acyl-CoAs, without apparent preference. In Mus musculus (Mouse), this protein is Serine palmitoyltransferase small subunit B (Sptssb).